Reading from the N-terminus, the 447-residue chain is SNF1-related protein kinase regulatory subunit gamma-1-like (447 aa).

Ala-2 bears the N-acetylalanine mark. Ser-35 carries the post-translational modification Phosphoserine. 4 CBS domains span residues 54 to 120, 214 to 275, 292 to 350, and 374 to 433; these read QVPG…SAEL, SFRW…GRDW, MSPN…PEVF, and LAIP…PNYF.

It belongs to the 5'-AMP-activated protein kinase gamma subunit family. Subunit of a probable heterotrimeric complex consisting of an alpha catalytic (KIN10 or KIN11) subunit, and a beta (KINB) and a gamma (KING or SNF4) non-catalytic regulatory subunits.

In terms of biological role, regulatory subunit of the probable trimeric SNF1-related protein kinase (SnRK) complex, which may play a role in a signal transduction cascade regulating gene expression and carbohydrate metabolism in higher plants. The protein is SNF1-related protein kinase regulatory subunit gamma-1-like (CBSCBS2) of Arabidopsis thaliana (Mouse-ear cress).